A 112-amino-acid polypeptide reads, in one-letter code: Putative pterin-4-alpha-carbinolamine dehydratase (112 aa).

It belongs to the pterin-4-alpha-carbinolamine dehydratase family.

The enzyme catalyses (4aS,6R)-4a-hydroxy-L-erythro-5,6,7,8-tetrahydrobiopterin = (6R)-L-erythro-6,7-dihydrobiopterin + H2O. This Syntrophotalea carbinolica (strain DSM 2380 / NBRC 103641 / GraBd1) (Pelobacter carbinolicus) protein is Putative pterin-4-alpha-carbinolamine dehydratase.